Consider the following 347-residue polypeptide: Phosphate acyltransferase (347 aa).

The protein belongs to the PlsX family. As to quaternary structure, homodimer. Probably interacts with PlsY.

The protein localises to the cytoplasm. The enzyme catalyses a fatty acyl-[ACP] + phosphate = an acyl phosphate + holo-[ACP]. It functions in the pathway lipid metabolism; phospholipid metabolism. In terms of biological role, catalyzes the reversible formation of acyl-phosphate (acyl-PO(4)) from acyl-[acyl-carrier-protein] (acyl-ACP). This enzyme utilizes acyl-ACP as fatty acyl donor, but not acyl-CoA. In Sinorhizobium medicae (strain WSM419) (Ensifer medicae), this protein is Phosphate acyltransferase.